Reading from the N-terminus, the 594-residue chain is Parathyroid hormone/parathyroid hormone-related peptide receptor (594 aa).

The signal sequence occupies residues 1–28 (MGTARIAPGLALLLCCPVLSSAYALVDA). Residues 29-188 (DDVMTKEEQI…TREREVFDRL (160 aa)) are Extracellular-facing. Cystine bridges form between cysteine 48-cysteine 117, cysteine 108-cysteine 149, and cysteine 132-cysteine 171. The segment at 66 to 102 (DKGWTSASTSGKPRKDKASGKLYPESEEDKEAPTDSR) is disordered. N-linked (GlcNAc...) asparagine glycosylation is found at asparagine 152, asparagine 162, asparagine 167, and asparagine 177. Residues 189-209 (GMIYTVGYSMSLASLTVAVLI) form a helical membrane-spanning segment. Topologically, residues 210–223 (LAYFRRLHCTRNYI) are cytoplasmic. A helical membrane pass occupies residues 224–244 (HMHLFLSFMLRAVSIFVKDAV). The Extracellular segment spans residues 245–295 (LYSGATLDEAERLTEEELRAIAQAPPPPATAAAGYAGCRVAVTFFLYFLAT). The chain crosses the membrane as a helical span at residues 296–316 (NYYWILVEGLYLHSLIFMAFF). Over 317–319 (SEK) the chain is Cytoplasmic. Residues 320-340 (KYLWGFTVFGWGLPAVFVAVW) form a helical membrane-spanning segment. Over 341–361 (VSVRATLANTGCWDLSSGNKK) the chain is Extracellular. Residues 362-382 (WIIQVPILASIVLHFILFINI) traverse the membrane as a helical segment. The Cytoplasmic segment spans residues 383–405 (VRVLATKLRETNAGRCDTRQQYR). Residues 406–426 (KLLKSTLVLMPLFGVHYIVFM) form a helical membrane-spanning segment. Over 427–440 (ATPYTEVSGTLWQV) the chain is Extracellular. The chain crosses the membrane as a helical span at residues 441–461 (QMHYEMLFNSFQGFFVAIIYC). The Cytoplasmic segment spans residues 462-594 (FCNGEVQAEI…LLQEEWETVM (133 aa)). Positions 475–478 (WSRW) match the Important for interaction with G proteins motif. The segment at 525-594 (PTATTNGHPQ…LLQEEWETVM (70 aa)) is disordered. The span at 543 to 558 (TPALETLETTPPATAA) shows a compositional bias: low complexity. Threonine 552 is subject to Phosphothreonine.

It belongs to the G-protein coupled receptor 2 family. As to quaternary structure, homodimer in the absence of bound ligand. Peptide hormone binding leads to dissociation of the homodimer. N-glycosylated.

It is found in the cell membrane. In terms of biological role, G-protein-coupled receptor for parathyroid hormone (PTH) and for parathyroid hormone-related peptide (PTHLH). Ligand binding causes a conformation change that triggers signaling via guanine nucleotide-binding proteins (G proteins) and modulates the activity of downstream effectors, such as adenylate cyclase (cAMP). PTH1R is coupled to G(s) G alpha proteins and mediates activation of adenylate cyclase activity. PTHLH dissociates from PTH1R more rapidly than PTH; as consequence, the cAMP response induced by PTHLH decays faster than the response induced by PTH. The sequence is that of Parathyroid hormone/parathyroid hormone-related peptide receptor (PTH1R) from Pongo abelii (Sumatran orangutan).